The sequence spans 360 residues: Phospho-N-acetylmuramoyl-pentapeptide-transferase (360 aa).

Transmembrane regions (helical) follow at residues 27–47 (GALITSALIVFIFGPTIINSL), 71–91 (TPTMGGLMILSGIIGSSLLWA), 93–113 (LSSIYVWVVLLVTLGFGSIGF), 134–154 (LGLEFIIAGIAAWVIMHNGQA), 168–188 (FIINLGWFFIPFSCFVIVGAG), 199–219 (GLAIVPIMIAAASFGVIAYLS), 239–259 (LAVVLGAVIGAGLGFLWFNAP), 262–282 (AIFMGDTGSLAMGGLIGTVAV), 288–308 (IVLVIVGGLFVVEILSVIIQV), and 337–357 (QVVIRFWIIAVILALVGLSTL).

The protein belongs to the glycosyltransferase 4 family. MraY subfamily. Requires Mg(2+) as cofactor.

The protein localises to the cell inner membrane. The enzyme catalyses UDP-N-acetyl-alpha-D-muramoyl-L-alanyl-gamma-D-glutamyl-meso-2,6-diaminopimeloyl-D-alanyl-D-alanine + di-trans,octa-cis-undecaprenyl phosphate = di-trans,octa-cis-undecaprenyl diphospho-N-acetyl-alpha-D-muramoyl-L-alanyl-D-glutamyl-meso-2,6-diaminopimeloyl-D-alanyl-D-alanine + UMP. Its pathway is cell wall biogenesis; peptidoglycan biosynthesis. Its function is as follows. Catalyzes the initial step of the lipid cycle reactions in the biosynthesis of the cell wall peptidoglycan: transfers peptidoglycan precursor phospho-MurNAc-pentapeptide from UDP-MurNAc-pentapeptide onto the lipid carrier undecaprenyl phosphate, yielding undecaprenyl-pyrophosphoryl-MurNAc-pentapeptide, known as lipid I. This chain is Phospho-N-acetylmuramoyl-pentapeptide-transferase, found in Mesorhizobium japonicum (strain LMG 29417 / CECT 9101 / MAFF 303099) (Mesorhizobium loti (strain MAFF 303099)).